The primary structure comprises 138 residues: ATP synthase epsilon chain (138 aa).

Belongs to the ATPase epsilon chain family. In terms of assembly, F-type ATPases have 2 components, CF(1) - the catalytic core - and CF(0) - the membrane proton channel. CF(1) has five subunits: alpha(3), beta(3), gamma(1), delta(1), epsilon(1). CF(0) has three main subunits: a, b and c.

Its subcellular location is the cell inner membrane. Functionally, produces ATP from ADP in the presence of a proton gradient across the membrane. This is ATP synthase epsilon chain from Citrifermentans bemidjiense (strain ATCC BAA-1014 / DSM 16622 / JCM 12645 / Bem) (Geobacter bemidjiensis).